A 283-amino-acid polypeptide reads, in one-letter code: Polyamine aminopropyltransferase (283 aa).

The PABS domain occupies 5–238; the sequence is STWIDEYHKG…GIWSWTFASE (234 aa). Residue Q32 participates in S-methyl-5'-thioadenosine binding. Residues H63 and D87 each coordinate spermidine. S-methyl-5'-thioadenosine is bound by residues E107 and 139–140; that span reads DG. Catalysis depends on D158, which acts as the Proton acceptor. 158–161 serves as a coordination point for spermidine; the sequence is DCSD.

It belongs to the spermidine/spermine synthase family. In terms of assembly, homodimer or homotetramer.

The protein localises to the cytoplasm. It catalyses the reaction S-adenosyl 3-(methylsulfanyl)propylamine + putrescine = S-methyl-5'-thioadenosine + spermidine + H(+). It functions in the pathway amine and polyamine biosynthesis; spermidine biosynthesis; spermidine from putrescine: step 1/1. Catalyzes the irreversible transfer of a propylamine group from the amino donor S-adenosylmethioninamine (decarboxy-AdoMet) to putrescine (1,4-diaminobutane) to yield spermidine. The sequence is that of Polyamine aminopropyltransferase from Prochlorococcus marinus (strain MIT 9312).